Consider the following 396-residue polypeptide: NADH-quinone oxidoreductase subunit D (396 aa).

It belongs to the complex I 49 kDa subunit family. In terms of assembly, NDH-1 is composed of 14 different subunits. Subunits NuoB, C, D, E, F, and G constitute the peripheral sector of the complex.

The protein resides in the cell inner membrane. It catalyses the reaction a quinone + NADH + 5 H(+)(in) = a quinol + NAD(+) + 4 H(+)(out). Its function is as follows. NDH-1 shuttles electrons from NADH, via FMN and iron-sulfur (Fe-S) centers, to quinones in the respiratory chain. The immediate electron acceptor for the enzyme in this species is believed to be ubiquinone. Couples the redox reaction to proton translocation (for every two electrons transferred, four hydrogen ions are translocated across the cytoplasmic membrane), and thus conserves the redox energy in a proton gradient. In Bartonella tribocorum (strain CIP 105476 / IBS 506), this protein is NADH-quinone oxidoreductase subunit D.